A 401-amino-acid polypeptide reads, in one-letter code: NADH-quinone oxidoreductase subunit D 2 (401 aa).

It belongs to the complex I 49 kDa subunit family. In terms of assembly, NDH-1 is composed of 14 different subunits. Subunits NuoB, C, D, E, F, and G constitute the peripheral sector of the complex.

Its subcellular location is the cell inner membrane. The catalysed reaction is a quinone + NADH + 5 H(+)(in) = a quinol + NAD(+) + 4 H(+)(out). NDH-1 shuttles electrons from NADH, via FMN and iron-sulfur (Fe-S) centers, to quinones in the respiratory chain. The immediate electron acceptor for the enzyme in this species is believed to be ubiquinone. Couples the redox reaction to proton translocation (for every two electrons transferred, four hydrogen ions are translocated across the cytoplasmic membrane), and thus conserves the redox energy in a proton gradient. This is NADH-quinone oxidoreductase subunit D 2 from Thermodesulfovibrio yellowstonii (strain ATCC 51303 / DSM 11347 / YP87).